Consider the following 194-residue polypeptide: Imidazoleglycerol-phosphate dehydratase (194 aa).

The protein belongs to the imidazoleglycerol-phosphate dehydratase family.

It is found in the cytoplasm. The enzyme catalyses D-erythro-1-(imidazol-4-yl)glycerol 3-phosphate = 3-(imidazol-4-yl)-2-oxopropyl phosphate + H2O. The protein operates within amino-acid biosynthesis; L-histidine biosynthesis; L-histidine from 5-phospho-alpha-D-ribose 1-diphosphate: step 6/9. The protein is Imidazoleglycerol-phosphate dehydratase of Streptococcus gordonii (strain Challis / ATCC 35105 / BCRC 15272 / CH1 / DL1 / V288).